Reading from the N-terminus, the 184-residue chain is Ribonuclease HII (184 aa).

The RNase H type-2 domain occupies 2 to 184 (AKICGIDEAG…KPKLAQSSLF (183 aa)). Residues Asp-8, Glu-9, and Asp-95 each coordinate a divalent metal cation.

It belongs to the RNase HII family. Requires Mn(2+) as cofactor. The cofactor is Mg(2+).

It is found in the cytoplasm. It carries out the reaction Endonucleolytic cleavage to 5'-phosphomonoester.. Endonuclease that specifically degrades the RNA of RNA-DNA hybrids. The polypeptide is Ribonuclease HII (Campylobacter concisus (strain 13826)).